A 349-amino-acid polypeptide reads, in one-letter code: MKAKLILENGVVFEGKAFGYLKECVGEVVFNTGMTGYQEVLTDPSYYGQIVTMTYPLIGNYGINLEDLESKEPKVRGFIVREKCQYPNNFRCELELETYLAQNKVLGLDGIDTRALTKILRNNGTMKGIIVLDNSNLEDVKDKLEAFSNRDAVSIVSTNEKYEISGEGKKVAIIDFGIKQNIIRNFVKRGCNVTVFPYDFKAEEVLEINPDLVFLSNGPGDPEDMGEAVNEIKKIVGKKPIVGICLGHQLLALTLGGETKKLKFGHRGCNHPVKDLINNRVHITSQNHGYYVATLPENMEITHVSMNDGTVEGMKHKELPIFSVQFHPEACPGPKDSEYIFDEFMKYAL.

Residues 1 to 170 are CPSase; sequence MKAKLILENG…KYEISGEGKK (170 aa). L-glutamine is bound by residues Ser45, Gly218, and Gly220. The 180-residue stretch at 170-349 folds into the Glutamine amidotransferase type-1 domain; the sequence is KVAIIDFGIK…IFDEFMKYAL (180 aa). The active-site Nucleophile is Cys245. Residues Leu246, Gln249, Asn287, Gly289, and Tyr290 each contribute to the L-glutamine site. Active-site residues include His327 and Glu329.

This sequence belongs to the CarA family. In terms of assembly, composed of two chains; the small (or glutamine) chain promotes the hydrolysis of glutamine to ammonia, which is used by the large (or ammonia) chain to synthesize carbamoyl phosphate. Tetramer of heterodimers (alpha,beta)4.

It carries out the reaction hydrogencarbonate + L-glutamine + 2 ATP + H2O = carbamoyl phosphate + L-glutamate + 2 ADP + phosphate + 2 H(+). The catalysed reaction is L-glutamine + H2O = L-glutamate + NH4(+). Its pathway is amino-acid biosynthesis; L-arginine biosynthesis; carbamoyl phosphate from bicarbonate: step 1/1. The protein operates within pyrimidine metabolism; UMP biosynthesis via de novo pathway; (S)-dihydroorotate from bicarbonate: step 1/3. Its function is as follows. Small subunit of the glutamine-dependent carbamoyl phosphate synthetase (CPSase). CPSase catalyzes the formation of carbamoyl phosphate from the ammonia moiety of glutamine, carbonate, and phosphate donated by ATP, constituting the first step of 2 biosynthetic pathways, one leading to arginine and/or urea and the other to pyrimidine nucleotides. The small subunit (glutamine amidotransferase) binds and cleaves glutamine to supply the large subunit with the substrate ammonia. This is Carbamoyl phosphate synthase small chain from Clostridium perfringens (strain 13 / Type A).